A 323-amino-acid polypeptide reads, in one-letter code: MSEHPENMTAPEWAAHIPVLLEEVLEYLAPRKGGRYLDGTLGLAGHASAVLERAGEGTELCGLDRDPEALRRATARLAPFAGQTHLYHLRYSEFEEALDDLGWPTVDGALIDIGVSSMQIDLAERGFSFHADGPLDMRMDPDAHESAWRLVNRERHEVLRDIIARYGEEPMAGRIARAIVDARNTGSIDTTLQLAAIVERAYPAKWRATARNHPATRTFQALRMAVNDELGELERFLDAILARLAPGGRLVVISFHSLEDRIVKHRMRHWAEGCRCPRHVPRCVCGHSPEVRILTKRPVTATDGELARNPRASSAKLRAAEKV.

Residues Ala-44–His-46, Asp-64, Tyr-91, Asp-112, and Gln-119 contribute to the S-adenosyl-L-methionine site.

This sequence belongs to the methyltransferase superfamily. RsmH family.

Its subcellular location is the cytoplasm. It carries out the reaction cytidine(1402) in 16S rRNA + S-adenosyl-L-methionine = N(4)-methylcytidine(1402) in 16S rRNA + S-adenosyl-L-homocysteine + H(+). Its function is as follows. Specifically methylates the N4 position of cytidine in position 1402 (C1402) of 16S rRNA. The polypeptide is Ribosomal RNA small subunit methyltransferase H (Nitratidesulfovibrio vulgaris (strain ATCC 29579 / DSM 644 / CCUG 34227 / NCIMB 8303 / VKM B-1760 / Hildenborough) (Desulfovibrio vulgaris)).